The primary structure comprises 585 residues: S-antigen protein (585 aa).

The first 23 residues, Met1 to Gly23, serve as a signal peptide directing secretion. The tract at residues Asn51 to Met585 is disordered. The span at Asp59–Asn85 shows a compositional bias: acidic residues. The span at Gln96–Val113 shows a compositional bias: basic and acidic residues. 56 tandem repeats follow at residues Glu102–Arg109, Glu110–Gly117, Glu118–Gly125, Glu126–Arg133, Glu134–Gly141, Glu142–Arg149, Glu150–Gly157, Glu158–Arg165, Glu166–Gly173, Glu174–Arg181, Glu182–Gly189, Glu190–Arg197, Glu198–Arg205, Glu206–Gly213, Glu214–Arg221, Glu222–Arg229, Glu230–Gly237, Glu238–Arg245, Glu246–Gly253, Glu254–Arg261, Glu262–Gly269, Glu270–Arg277, Glu278–Arg285, Glu286–Arg293, Glu294–Gly301, Glu302–Arg309, Glu310–Gly317, Glu318–Arg325, Glu326–Arg333, Glu334–Gly341, Glu342–Arg349, Glu350–Gly357, Glu358–Arg365, Glu366–Arg373, Glu374–Arg381, Glu382–Arg389, Glu390–Gly397, Glu398–Arg405, Glu406–Arg413, Glu414–Gly421, Glu422–Arg429, Glu430–Gly437, Glu438–Arg445, Glu446–Arg453, Glu454–Arg461, Glu462–Gly469, Glu470–Gly477, Glu478–Arg485, Glu486–Gly493, Glu494–Arg501, Glu502–Gly509, Glu510–Arg517, Glu518–Gly525, Glu526–Arg533, Glu534–Arg541, and Glu542–Arg549. The segment at Glu102–Arg549 is 56 X 8 AA tandem repeats of E-D-[EK]-V-S-N-G-[RG]. Residues Gly117–Val129 show a composition bias toward acidic residues. 2 stretches are compositionally biased toward basic and acidic residues: residues Ser194–Val209 and Ser218–Val233. Residues Ser274–Val297 are compositionally biased toward basic and acidic residues. Residues Ser322–Val337 show a composition bias toward basic and acidic residues. 2 stretches are compositionally biased toward basic and acidic residues: residues Ser362–Val393 and Ser402–Val417. Over residues Ser442–Val465 the composition is skewed to basic and acidic residues. Positions Gly469–Val481 are enriched in acidic residues. Composition is skewed to basic and acidic residues over residues Ser530–Gly553 and Glu560–Thr569. The segment covering Asn576–Met585 has biased composition (low complexity).

The protein resides in the parasitophorous vacuole. Its function is as follows. S antigens are soluble heat-stable proteins present in the sera of some infected individuals. The protein is S-antigen protein of Plasmodium falciparum (isolate 3D7).